Consider the following 333-residue polypeptide: Adenosine deaminase (333 aa).

Zn(2+) is bound by residues His-12 and His-14. His-14, Asp-16, and Gly-170 together coordinate substrate. Residue His-197 coordinates Zn(2+). Glu-200 serves as the catalytic Proton donor. Asp-278 contributes to the Zn(2+) binding site. Substrate is bound at residue Asp-279.

Belongs to the metallo-dependent hydrolases superfamily. Adenosine and AMP deaminases family. Adenosine deaminase subfamily. It depends on Zn(2+) as a cofactor.

It carries out the reaction adenosine + H2O + H(+) = inosine + NH4(+). The enzyme catalyses 2'-deoxyadenosine + H2O + H(+) = 2'-deoxyinosine + NH4(+). Its function is as follows. Catalyzes the hydrolytic deamination of adenosine and 2-deoxyadenosine. In Salmonella schwarzengrund (strain CVM19633), this protein is Adenosine deaminase.